Consider the following 186-residue polypeptide: MNPIALLLLAFAMSTDAFAAAIGKGAILKKPRLTEAFRIGIIFGSIEAITPLVGWLIGKSAASYVEAWDHWIAFSLLTVLGLHMIYEGTRPDGGSEEHKAQKMSLLRTCLTAFSTSIDAMAVGVSLAFINVNIWIASALIGLATTLMVTIGIMLGRAIGSVMGHRAEIFGGLTLIAVGAWILYGQL.

The next 6 helical transmembrane spans lie at 3–23, 39–59, 65–85, 109–129, 133–153, and 166–186; these read PIAL…AAIG, IGII…LIGK, VEAW…LHMI, CLTA…LAFI, IWIA…IGIM, and AEIF…YGQL.

It belongs to the MntP (TC 9.B.29) family.

It localises to the cell inner membrane. Its function is as follows. Probably functions as a manganese efflux pump. This Alcanivorax borkumensis (strain ATCC 700651 / DSM 11573 / NCIMB 13689 / SK2) protein is Putative manganese efflux pump MntP.